The primary structure comprises 323 residues: Viral cathepsin (323 aa).

An N-terminal signal peptide occupies residues 1–16 (MNKILFYLFVYAVVKS). A propeptide spans 17–112 (AAYDPLKAPN…ILLDQPPGKG (96 aa)) (activation peptide). Intrachain disulfides connect Cys133–Cys174, Cys167–Cys207, and Cys262–Cys310. Cys136 is a catalytic residue. Residue Asn158 is glycosylated (N-linked (GlcNAc...) asparagine; by host). Catalysis depends on residues His269 and Asn289.

The protein belongs to the peptidase C1 family. Post-translationally, synthesized as an inactive proenzyme and activated by proteolytic removal of the inhibitory propeptide.

It carries out the reaction Endopeptidase of broad specificity, hydrolyzing substrates of both cathepsin L and cathepsin B.. Its function is as follows. Cysteine protease that plays an essential role in host liquefaction to facilitate horizontal transmission of the virus. May participate in the degradation of foreign protein expressed by the baculovirus system. This chain is Viral cathepsin (VCATH), found in Bombyx mori (Silk moth).